Consider the following 98-residue polypeptide: Aspartyl/glutamyl-tRNA(Asn/Gln) amidotransferase subunit C (98 aa).

The disordered stretch occupies residues 75 to 98 (EQALSGAPDSDDNRFKVPAILDEA).

The protein belongs to the GatC family. As to quaternary structure, heterotrimer of A, B and C subunits.

It catalyses the reaction L-glutamyl-tRNA(Gln) + L-glutamine + ATP + H2O = L-glutaminyl-tRNA(Gln) + L-glutamate + ADP + phosphate + H(+). It carries out the reaction L-aspartyl-tRNA(Asn) + L-glutamine + ATP + H2O = L-asparaginyl-tRNA(Asn) + L-glutamate + ADP + phosphate + 2 H(+). Functionally, allows the formation of correctly charged Asn-tRNA(Asn) or Gln-tRNA(Gln) through the transamidation of misacylated Asp-tRNA(Asn) or Glu-tRNA(Gln) in organisms which lack either or both of asparaginyl-tRNA or glutaminyl-tRNA synthetases. The reaction takes place in the presence of glutamine and ATP through an activated phospho-Asp-tRNA(Asn) or phospho-Glu-tRNA(Gln). The protein is Aspartyl/glutamyl-tRNA(Asn/Gln) amidotransferase subunit C of Pseudarthrobacter chlorophenolicus (strain ATCC 700700 / DSM 12829 / CIP 107037 / JCM 12360 / KCTC 9906 / NCIMB 13794 / A6) (Arthrobacter chlorophenolicus).